We begin with the raw amino-acid sequence, 75 residues long: DNA-directed RNA polymerase subunit omega (75 aa).

It belongs to the RNA polymerase subunit omega family. In cyanobacteria the RNAP catalytic core is composed of 2 alpha, 1 beta, 1 beta', 1 gamma and 1 omega subunit. When a sigma factor is associated with the core the holoenzyme is formed, which can initiate transcription.

The enzyme catalyses RNA(n) + a ribonucleoside 5'-triphosphate = RNA(n+1) + diphosphate. Functionally, promotes RNA polymerase assembly. Latches the N- and C-terminal regions of the beta' subunit thereby facilitating its interaction with the beta and alpha subunits. This Cyanothece sp. (strain PCC 7425 / ATCC 29141) protein is DNA-directed RNA polymerase subunit omega.